The primary structure comprises 289 residues: Phosphoribulokinase (289 aa).

12–20 (GSSGAGTTT) provides a ligand contact to ATP.

It belongs to the phosphoribulokinase family.

The enzyme catalyses D-ribulose 5-phosphate + ATP = D-ribulose 1,5-bisphosphate + ADP + H(+). It participates in carbohydrate biosynthesis; Calvin cycle. The chain is Phosphoribulokinase (cbbP) from Rhizobium meliloti (strain 1021) (Ensifer meliloti).